The primary structure comprises 444 residues: 23S rRNA (uracil(1939)-C(5))-methyltransferase RlmD (444 aa).

Residues 5 to 64 (KPKLNLTSQTARIVNLSHDGRGIARINGKATFIQGALPGEVVEFQYTRVKKDFDEGKLLS) form the TRAM domain. Residues C77, C83, C86, and C166 each coordinate [4Fe-4S] cluster. S-adenosyl-L-methionine is bound by residues Q276, F305, N310, E326, N353, and D374. Residue C400 is the Nucleophile of the active site.

This sequence belongs to the class I-like SAM-binding methyltransferase superfamily. RNA M5U methyltransferase family. RlmD subfamily.

The catalysed reaction is uridine(1939) in 23S rRNA + S-adenosyl-L-methionine = 5-methyluridine(1939) in 23S rRNA + S-adenosyl-L-homocysteine + H(+). Its function is as follows. Catalyzes the formation of 5-methyl-uridine at position 1939 (m5U1939) in 23S rRNA. The protein is 23S rRNA (uracil(1939)-C(5))-methyltransferase RlmD of Legionella pneumophila (strain Lens).